Here is a 796-residue protein sequence, read N- to C-terminus: Protein translocase subunit SecA 2 (796 aa).

ATP contacts are provided by residues Gln-84, 102-106 (GEGKT), and Asp-496.

It belongs to the SecA family. Monomer and homodimer. Part of the essential Sec protein translocation apparatus which comprises SecA, SecYEG and auxiliary proteins SecDF. Other proteins may also be involved.

The protein resides in the cell membrane. Its subcellular location is the cytoplasm. It carries out the reaction ATP + H2O + cellular proteinSide 1 = ADP + phosphate + cellular proteinSide 2.. Functionally, part of the Sec protein translocase complex. Interacts with the SecYEG preprotein conducting channel. Has a central role in coupling the hydrolysis of ATP to the transfer of proteins into and across the cell membrane, serving as an ATP-driven molecular motor driving the stepwise translocation of polypeptide chains across the membrane. This Staphylococcus epidermidis (strain ATCC 35984 / DSM 28319 / BCRC 17069 / CCUG 31568 / BM 3577 / RP62A) protein is Protein translocase subunit SecA 2.